The following is a 104-amino-acid chain: Translation initiation factor 1A (104 aa).

A compositionally biased stretch (low complexity) spans 1-14 (MRGQQAPPQQPTRV). Residues 1-20 (MRGQQAPPQQPTRVRTPREN) form a disordered region. In terms of domain architecture, S1-like spans 12-87 (TRVRTPRENE…EKCDVIWRYT (76 aa)).

It belongs to the eIF-1A family.

Its function is as follows. Seems to be required for maximal rate of protein biosynthesis. Enhances ribosome dissociation into subunits and stabilizes the binding of the initiator Met-tRNA(I) to 40 S ribosomal subunits. The sequence is that of Translation initiation factor 1A (eIF1A) from Methanococcus maripaludis (strain C6 / ATCC BAA-1332).